Consider the following 331-residue polypeptide: L-lactate dehydrogenase A chain (331 aa).

NAD(+)-binding positions include 29 to 57 (GMVG…MEDK) and arginine 98. The substrate site is built by arginine 105, asparagine 137, and arginine 168. Position 137 (asparagine 137) interacts with NAD(+). Histidine 192 acts as the Proton acceptor in catalysis. Residue threonine 247 participates in substrate binding.

It belongs to the LDH/MDH superfamily. LDH family. Homotetramer.

The protein localises to the cytoplasm. The enzyme catalyses (S)-lactate + NAD(+) = pyruvate + NADH + H(+). The protein operates within fermentation; pyruvate fermentation to lactate; (S)-lactate from pyruvate: step 1/1. Interconverts simultaneously and stereospecifically pyruvate and lactate with concomitant interconversion of NADH and NAD(+). In Dissostichus eleginoides (Patagonian toothfish), this protein is L-lactate dehydrogenase A chain (ldha).